The chain runs to 305 residues: MQKYDIKTFQGMILALQDYWAQNGCTIVQPLDMEVGAGTSHPMTCLRALGPEPMSTAYVQPSRRPTDGRYGENPNRLQHYYQFQVALKPSPDNIQELYLGSLEVLGIDPLVHDIRFVEDNWENPTLGAWGLGWEVWLNGMEVTQFTYFQQVGGLECKPVTGEITYGIERLAMYIQEVDSVYDLTWNIAPDGSKVTYGDIFHQNEVEQSTYNFEHADVDFLFSFFDQCEKESKELLELEKPLPLPAYERILKAAHAFNLLDARKAISVTERQRYILRIRNLTKAVAEAYYASREALGFPMCKKEQA.

The protein belongs to the class-II aminoacyl-tRNA synthetase family. As to quaternary structure, tetramer of two alpha and two beta subunits.

The protein localises to the cytoplasm. The enzyme catalyses tRNA(Gly) + glycine + ATP = glycyl-tRNA(Gly) + AMP + diphosphate. This Vibrio parahaemolyticus serotype O3:K6 (strain RIMD 2210633) protein is Glycine--tRNA ligase alpha subunit.